The following is a 337-amino-acid chain: Protein-arginine kinase (337 aa).

A Phosphagen kinase C-terminal domain is found at 12–240; sequence IVIASKVKIL…NKLILREKNQ (229 aa). ATP contacts are provided by residues 15-19, 162-166, and 193-198; these read ASKVK, RAKVF, and KSIYNS.

It belongs to the ATP:guanido phosphotransferase family.

The enzyme catalyses L-arginyl-[protein] + ATP = N(omega)-phospho-L-arginyl-[protein] + ADP + H(+). In terms of biological role, catalyzes the specific phosphorylation of arginine residues in proteins. This chain is Protein-arginine kinase, found in Clostridium perfringens (strain ATCC 13124 / DSM 756 / JCM 1290 / NCIMB 6125 / NCTC 8237 / Type A).